Consider the following 505-residue polypeptide: Maturase K (505 aa).

This sequence belongs to the intron maturase 2 family. MatK subfamily.

It is found in the plastid. The protein localises to the chloroplast. Usually encoded in the trnK tRNA gene intron. Probably assists in splicing its own and other chloroplast group II introns. The protein is Maturase K of Amaranthus greggii (Gregg's amaranth).